Consider the following 221-residue polypeptide: Leucyl/phenylalanyl-tRNA--protein transferase (221 aa).

It belongs to the L/F-transferase family.

The protein resides in the cytoplasm. It carries out the reaction N-terminal L-lysyl-[protein] + L-leucyl-tRNA(Leu) = N-terminal L-leucyl-L-lysyl-[protein] + tRNA(Leu) + H(+). The enzyme catalyses N-terminal L-arginyl-[protein] + L-leucyl-tRNA(Leu) = N-terminal L-leucyl-L-arginyl-[protein] + tRNA(Leu) + H(+). It catalyses the reaction L-phenylalanyl-tRNA(Phe) + an N-terminal L-alpha-aminoacyl-[protein] = an N-terminal L-phenylalanyl-L-alpha-aminoacyl-[protein] + tRNA(Phe). Functions in the N-end rule pathway of protein degradation where it conjugates Leu, Phe and, less efficiently, Met from aminoacyl-tRNAs to the N-termini of proteins containing an N-terminal arginine or lysine. In Phenylobacterium zucineum (strain HLK1), this protein is Leucyl/phenylalanyl-tRNA--protein transferase.